A 320-amino-acid polypeptide reads, in one-letter code: MTAAVSTTDTPLNASPARGSIGISRKFKAYLALTKPRVIELLLVSTLPTMIFAQRGFPSIGLILATLVGGAFAAGSAGVFNCYIDRDIDKLMHRTEKRPLVTGEVTPREALVFAWILGAASIAILWFGANPLSAWLGLGAIVFYVVIYTMILKRRTAQNIVWGGAAGCFPVLIAWAAVTNTVEWPAIVLFMVIFLWTPPHYWPLSMRYGEDYRNAKVPMLGAIAGAKVVSVQVVLYAWAMVACSLLMVPVGGAGWVYTIAAVAAGAWFLYESHALYKRAQGGDVSNKGAMKVFHGSISYLTLLFIALAVDPFVGSAIVGS.

Helical transmembrane passes span Val38–Pro58, Ile60–Phe80, Glu109–Ala129, Leu132–Leu152, Asn159–Thr179, Trp184–Leu204, Ala222–Ala242, Gly254–Tyr276, and Tyr299–Gly319.

It belongs to the UbiA prenyltransferase family. Protoheme IX farnesyltransferase subfamily.

The protein resides in the cell membrane. It catalyses the reaction heme b + (2E,6E)-farnesyl diphosphate + H2O = Fe(II)-heme o + diphosphate. It functions in the pathway porphyrin-containing compound metabolism; heme O biosynthesis; heme O from protoheme: step 1/1. Functionally, converts heme B (protoheme IX) to heme O by substitution of the vinyl group on carbon 2 of heme B porphyrin ring with a hydroxyethyl farnesyl side group. The polypeptide is Protoheme IX farnesyltransferase (Paenarthrobacter aurescens (strain TC1)).